The sequence spans 764 residues: FAST kinase domain-containing protein 5, mitochondrial (764 aa).

Residues 1-27 constitute a mitochondrion transit peptide; sequence MAATLKSLKLVRYRAFCSPSAFGAVRS. Ser-95 is subject to Phosphoserine. Lys-507 bears the N6-acetyllysine mark. In terms of domain architecture, RAP spans 697 to 757; that stretch reads LAVQFTNRNQ…RLEKLAFLHE (61 aa).

It belongs to the FAST kinase family. As to quaternary structure, found in a complex with GRSF1, DDX28, DHX30 and FASTKD2. Associates with the 12S mitochondrial rRNA (12S mt-rRNA). As to expression, expression detected in spleen, thymus, testis, ovary, colon, heart, smooth muscle, kidney, brain, lung, liver and white adipose tissue with highest expression in heart, smooth muscle, liver and thyroid.

Its subcellular location is the mitochondrion matrix. The protein localises to the mitochondrion nucleoid. In terms of biological role, plays an important role in the processing of non-canonical mitochondrial mRNA precursors. The polypeptide is FAST kinase domain-containing protein 5, mitochondrial (FASTKD5) (Homo sapiens (Human)).